The chain runs to 152 residues: MAMERTFVAIKPDGVQRGLVGEILGRFERKGFKLVGLKQVTPSRDLAGEHYGVHRERPFFAGLVDFITSGPVIAMVWEGDGVIASARKLIGATKPLDAEPGTIRGDLAVNIGRNVIHGSDGPDTAQFEINLWFSAEELNAWTPSDQSWRIES.

Positions 11, 59, 87, 93, 104, and 114 each coordinate ATP. The active-site Pros-phosphohistidine intermediate is His-117.

The protein belongs to the NDK family. As to quaternary structure, homotetramer. Mg(2+) serves as cofactor.

Its subcellular location is the cytoplasm. The enzyme catalyses a 2'-deoxyribonucleoside 5'-diphosphate + ATP = a 2'-deoxyribonucleoside 5'-triphosphate + ADP. It carries out the reaction a ribonucleoside 5'-diphosphate + ATP = a ribonucleoside 5'-triphosphate + ADP. Major role in the synthesis of nucleoside triphosphates other than ATP. The ATP gamma phosphate is transferred to the NDP beta phosphate via a ping-pong mechanism, using a phosphorylated active-site intermediate. The protein is Nucleoside diphosphate kinase of Prochlorococcus marinus (strain MIT 9313).